The following is a 333-amino-acid chain: L-lactate dehydrogenase (333 aa).

NAD(+)-binding positions include 29–57 (GQVG…VADK) and arginine 99. The substrate site is built by arginine 106, asparagine 138, and arginine 169. Asparagine 138 contacts NAD(+). Histidine 193 acts as the Proton acceptor in catalysis. Threonine 249 contacts substrate.

The protein belongs to the LDH/MDH superfamily. LDH family. Homotetramer.

It localises to the cytoplasm. It carries out the reaction (S)-lactate + NAD(+) = pyruvate + NADH + H(+). Its pathway is fermentation; pyruvate fermentation to lactate; (S)-lactate from pyruvate: step 1/1. The protein is L-lactate dehydrogenase (ldh-1) of Caenorhabditis elegans.